A 176-amino-acid polypeptide reads, in one-letter code: Myelin basic protein (176 aa).

The segment covering 1 to 11 has biased composition (basic residues); sequence MASQKHSRGHG. The interval 1–176 is disordered; that stretch reads MASQKHSRGH…SRSSSPMARR (176 aa). Residue Ala2 is modified to N-acetylalanine. A Phosphoserine modification is found at Ser7. Arg25 and Arg33 each carry citrulline. Phosphoserine is present on Ser58. At Asn97 the chain carries Deamidated asparagine. Position 103 is a phosphothreonine (Thr103). Residue Gln108 is modified to Deamidated glutamine. Position 111 is a symmetric dimethylarginine (Arg111). Residue Ser117 is modified to Phosphoserine. Over residues 134–153 the composition is skewed to basic and acidic residues; sequence SLEHHKSSYKGYKDPHREGH. Residues 166–176 are compositionally biased toward polar residues; the sequence is RSRSSSPMARR. Phosphoserine is present on residues Ser167 and Ser171. Position 176 is a citrulline (Arg176).

This sequence belongs to the myelin basic protein family. As to quaternary structure, homodimer. In terms of processing, as in other animals, several charge isomers may be produced as a result of optional post-translational modifications, such as phosphorylation of serine or threonine residues, deamidation of glutamine or asparagine residues, citrullination and methylation of arginine residues.

It is found in the myelin membrane. Is, with PLP, the most abundant protein component of the myelin membrane in the CNS. Plays a role in both the formation and stabilization of this compact multilayer arrangement of bilayers. Each splice variant and charge isomer may have a specialized function in the assembly of an optimized, biochemically functional myelin membrane. The chain is Myelin basic protein (mbp) from Xenopus laevis (African clawed frog).